A 90-amino-acid polypeptide reads, in one-letter code: U7-theraphotoxin-Hhn1c (90 aa).

The N-terminal stretch at 1–19 is a signal peptide; sequence MKTAIFTVVLALAVFAVLS. A propeptide spanning residues 20-50 is cleaved from the precursor; the sequence is FGWEANEKALSEEFTELIHEKEAASETEARE. 3 disulfide bridges follow: Cys51/Cys65, Cys58/Cys70, and Cys64/Cys81.

Belongs to the neurotoxin 10 (Hwtx-1) family. 13 (Hntx-13) subfamily. Expressed by the venom gland.

It localises to the secreted. Ion channel inhibitor. The polypeptide is U7-theraphotoxin-Hhn1c (Cyriopagopus hainanus (Chinese bird spider)).